The following is a 488-amino-acid chain: 3-octaprenyl-4-hydroxybenzoate carboxy-lyase (488 aa).

Asn172 is a binding site for Mn(2+). Prenylated FMN-binding positions include 175–177 (IYR), 189–191 (RWL), and 194–195 (RG). A Mn(2+)-binding site is contributed by Glu238. The active-site Proton donor is Asp287.

Belongs to the UbiD family. As to quaternary structure, homohexamer. It depends on prenylated FMN as a cofactor. Mn(2+) serves as cofactor.

Its subcellular location is the cell membrane. The catalysed reaction is a 4-hydroxy-3-(all-trans-polyprenyl)benzoate + H(+) = a 2-(all-trans-polyprenyl)phenol + CO2. The protein operates within cofactor biosynthesis; ubiquinone biosynthesis. Catalyzes the decarboxylation of 3-octaprenyl-4-hydroxy benzoate to 2-octaprenylphenol, an intermediate step in ubiquinone biosynthesis. This is 3-octaprenyl-4-hydroxybenzoate carboxy-lyase from Pseudomonas savastanoi pv. phaseolicola (strain 1448A / Race 6) (Pseudomonas syringae pv. phaseolicola (strain 1448A / Race 6)).